The sequence spans 154 residues: Protein X (154 aa).

The tract at residues arginine 26–valine 45 is disordered. Low complexity predominate over residues serine 31–serine 43. The segment at proline 68–phenylalanine 117 is mitochondrial targeting sequence.

The protein belongs to the orthohepadnavirus protein X family. In terms of assembly, may form homodimer. May interact with host CEBPA, CFLAR, CREB1, DDB1, E4F1, HBXIP, HSPD1/HSP60, NFKBIA, POLR2E and SMAD4. Interacts with host SMC5-SMC6 complex and induces its degradation. Interacts with host TRPC4AP; leading to prevent ubiquitination of TRPC4AP. Interacts with host PLSCR1; this interaction promotes ubiquitination and degradation of HBx and impairs HBx-mediated cell proliferation. Post-translationally, a fraction may be phosphorylated in insect cells and HepG2 cells, a human hepatoblastoma cell line. Phosphorylated in vitro by host protein kinase C or mitogen-activated protein kinase. N-acetylated in insect cells.

It localises to the host cytoplasm. Its subcellular location is the host nucleus. It is found in the host mitochondrion. Its function is as follows. Multifunctional protein that plays a role in silencing host antiviral defenses and promoting viral transcription. Does not seem to be essential for HBV infection. May be directly involved in development of cirrhosis and liver cancer (hepatocellular carcinoma). Most of cytosolic activities involve modulation of cytosolic calcium. The effect on apoptosis is controversial depending on the cell types in which the studies have been conducted. May induce apoptosis by localizing in mitochondria and causing loss of mitochondrial membrane potential. May also modulate apoptosis by binding host CFLAR, a key regulator of the death-inducing signaling complex (DISC). Promotes viral transcription by using the host E3 ubiquitin ligase DDB1 to target the SMC5-SMC6 complex to proteasomal degradation. This host complex would otherwise bind to viral episomal DNA, and prevents its transcription. Moderately stimulates transcription of many different viral and cellular transcription elements. Promoters and enhancers stimulated by HBx contain DNA binding sites for NF-kappa-B, AP-1, AP-2, c-EBP, ATF/CREB, or the calcium-activated factor NF-AT. The sequence is that of Protein X from Hepatitis B virus genotype D subtype ayw (isolate Japan/JYW796/1988) (HBV-D).